The sequence spans 353 residues: MHKRPLSILLRPLGLLYGLIAEIRNTLFETALLTPWRPPCPVVSIGNITAGGTGKTPMVDWTTKYFLSLGCRVAIISRGYGRLTKGVQMVSDGRHLLLSAREAGDETAMLAANNPEAIVVAAEKRKEGARFIQKTFENFPPDVIILDDAFQHRQMARDLDIVIVSASEPFFKARMLPEGRLREPLRNLARADIILLGKITDPDEADAIEHALTATGRPVLRTRVHTLGLEPVTDCSEESANTGVQLQALAFAGIAAPEEFLASLRRTGTDVRAHRFFRDHQPYTTETVRSLIREAKEKGLSLVTTEKDWFRLLGDPQLKELMEHAGCSYLKIETRLPEGEEKLRMALRDLVGR.

49-56 serves as a coordination point for ATP; it reads TAGGTGKT.

Belongs to the LpxK family.

It carries out the reaction a lipid A disaccharide + ATP = a lipid IVA + ADP + H(+). It participates in glycolipid biosynthesis; lipid IV(A) biosynthesis; lipid IV(A) from (3R)-3-hydroxytetradecanoyl-[acyl-carrier-protein] and UDP-N-acetyl-alpha-D-glucosamine: step 6/6. Transfers the gamma-phosphate of ATP to the 4'-position of a tetraacyldisaccharide 1-phosphate intermediate (termed DS-1-P) to form tetraacyldisaccharide 1,4'-bis-phosphate (lipid IVA). This is Tetraacyldisaccharide 4'-kinase from Chlorobium phaeovibrioides (strain DSM 265 / 1930) (Prosthecochloris vibrioformis (strain DSM 265)).